A 350-amino-acid polypeptide reads, in one-letter code: tRNA uridine(34) hydroxylase (350 aa).

Positions 146–240 (DDPDALFIDM…YARKAREQGL (95 aa)) constitute a Rhodanese domain. C200 acts as the Cysteine persulfide intermediate in catalysis.

The protein belongs to the TrhO family.

The catalysed reaction is uridine(34) in tRNA + AH2 + O2 = 5-hydroxyuridine(34) in tRNA + A + H2O. Functionally, catalyzes oxygen-dependent 5-hydroxyuridine (ho5U) modification at position 34 in tRNAs. The polypeptide is tRNA uridine(34) hydroxylase (Shigella dysenteriae serotype 1 (strain Sd197)).